We begin with the raw amino-acid sequence, 331 residues long: Zinc finger protein 660 (331 aa).

Residues 1 to 12 (MRRKTRNFKHKT) show a composition bias toward basic residues. The interval 1–35 (MRRKTRNFKHKTVKDNKVLTEGSDQESEKDNSQCC) is disordered. Residue serine 23 is modified to Phosphoserine. 10 consecutive C2H2-type zinc fingers follow at residues 50–72 (YVCTECGKAFSQSANLTVHERIH), 78–100 (YKCKECGKAFSHSSNLVVHRRIH), 106–128 (YTCSECGKSFSGKSHLIRHQGIH), 134–156 (YECKECGKAFSRSSGLISHHRVH), 162–184 (YSCIECGKAFSRSSNLTQHQRMH), 190–212 (YKCKECGKTCGSNTKIMDHQRIH), 218–240 (YECDECGKTFILRKTLNEHQRLH), 246–268 (YKCNECGKAFTSNRNLVDHQRVH), 274–296 (YKCNECGKTFRQTSQVILHLRTH), and 302–324 (YKCSECGKAYRYSSQLIQHQRKH).

Belongs to the krueppel C2H2-type zinc-finger protein family.

It is found in the nucleus. Its function is as follows. May be involved in transcriptional regulation. In Homo sapiens (Human), this protein is Zinc finger protein 660 (ZNF660).